We begin with the raw amino-acid sequence, 217 residues long: Zinc finger CCHC-type and RNA-binding motif-containing protein 1 (217 aa).

The region spanning 10–88 (STVYVSNLPF…RVIKASIAID (79 aa)) is the RRM domain. The CCHC-type zinc finger occupies 105–122 (SKCYECGESGHLSYACPK). A disordered region spans residues 120 to 217 (CPKNMLGERE…YFSDEEELSD (98 aa)). Residues 145 to 163 (PEEEIEEVEESEDEGEDPA) show a composition bias toward acidic residues. Serine 155, serine 210, and serine 216 each carry phosphoserine.

As to quaternary structure, component of the U11/U12 snRNPs that are part of the U12-type spliceosome. Interacts with ZRSR1.

It localises to the nucleus. It is found in the nucleoplasm. This Bos taurus (Bovine) protein is Zinc finger CCHC-type and RNA-binding motif-containing protein 1 (ZCRB1).